A 799-amino-acid polypeptide reads, in one-letter code: 1-phosphatidylinositol 4,5-bisphosphate phosphodiesterase delta-4 (799 aa).

One can recognise a PH domain in the interval 16 to 124; sequence LLMQEGMPMR…WMRGLHLLVD (109 aa). Residues 26-53 are substrate binding; the sequence is KVRSKSWKKLRYFRLQNDGMTVWHARQA. 3 consecutive EF-hand domains span residues 134–169, 170–205, and 206–237; these read RLDQWLSDWFQRGDKNQDGKMSFQEVQRLLHLMNVE, MDQEYAFSLFQAADTSQSGTLEGEEFVEFYKALTKR, and AEVQELFESFSADGQKLTLLEFSDFLREEQKE. Asp147, Asn149, Asp151, Lys153, Glu158, Asp183, Ser185, Ser187, Thr189, and Glu194 together coordinate Ca(2+). The short motif at 213-243 is the GBA element; the sequence is ESFSADGQKLTLLEFSDFLREEQKERDCTSE. Residues 290-435 enclose the PI-PLC X-box domain; that stretch reads QDMTQPLNHY…LRRKILVKGK (146 aa). The active site involves His305. Ca(2+) is bound by residues Asn306, Glu335, and Asp337. The active site involves His350. A Ca(2+)-binding site is contributed by Glu384. The substrate site is built by Lys433 and Lys435. Ser460 carries the post-translational modification Phosphoserine. The region spanning 530-646 is the PI-PLC Y-box domain; the sequence is LSSLVIYLKS…GYVLKPDFLR (117 aa). Ser559 and Arg586 together coordinate substrate. The C2 domain maps to 646–773; the sequence is RDNQSSFHPE…QGYRHIHLLS (128 aa). Positions 687, 689, 713, 742, 743, and 744 each coordinate Ca(2+). A PDZ-binding motif is present at residues 768-771; it reads HIHL.

In terms of assembly, interacts with GRIP1. Interacts (via GBA motif) with guanine nucleotide-binding protein G(i) alpha subunit GNAI3 (inactive GDP-bound form); low-affinity interaction. Ca(2+) is required as a cofactor.

It is found in the membrane. The protein resides in the nucleus. Its subcellular location is the cytoplasm. The protein localises to the endoplasmic reticulum. The catalysed reaction is a 1,2-diacyl-sn-glycero-3-phospho-(1D-myo-inositol-4,5-bisphosphate) + H2O = 1D-myo-inositol 1,4,5-trisphosphate + a 1,2-diacyl-sn-glycerol + H(+). It catalyses the reaction a 1,2-diacyl-sn-glycero-3-phospho-(1D-myo-inositol) + H2O = 1D-myo-inositol 1-phosphate + a 1,2-diacyl-sn-glycerol + H(+). Functionally, hydrolyzes the phosphatidylinositol 4,5-bisphosphate (PIP2) to generate 2 second messenger molecules diacylglycerol (DAG) and inositol 1,4,5-trisphosphate (IP3). DAG mediates the activation of protein kinase C (PKC), while IP3 releases Ca(2+) from intracellular stores. Required for acrosome reaction in sperm during fertilization, probably by acting as an important enzyme for intracellular Ca(2+) mobilization in the zona pellucida-induced acrosome reaction. May play a role in cell growth. Modulates the liver regeneration in cooperation with nuclear PKC. Overexpression up-regulates the Erk signaling pathway and proliferation. This Macaca fascicularis (Crab-eating macaque) protein is 1-phosphatidylinositol 4,5-bisphosphate phosphodiesterase delta-4 (PLCD4).